The sequence spans 642 residues: Aryl hydrocarbon receptor nuclear translocator homolog (642 aa).

The bHLH domain occupies 13–66 (ASRENHCEIERRRRNKMTAYITELSDMVPTCSALARKPDKLTILRMAVAHMKAL). PAS domains follow at residues 85–156 (DQEL…ESQN) and 271–341 (TAAN…LKQK). A PAC domain is found at 346 to 389 (SLLYRARAKNSEYVWLRTQAYAFLNPYTDEVEYIVCTNSSGKTM). Residues 450-612 (QAPTPQQQQQ…GPAGAGQPQG (163 aa)) are disordered. 2 stretches are compositionally biased toward polar residues: residues 463–482 (RPGS…THSP) and 528–554 (YQYQ…NGNR). The span at 555–564 (QQAQPGAYQA) shows a compositional bias: low complexity.

Efficient DNA binding requires dimerization with another bHLH protein. Heterodimer with ahr, trh or sim. At stage 11, expression is detected in tracheal pits. At later stages, strong expression is also detected in the CNS.

The protein resides in the nucleus. Heterodimers of tgo/trh are involved in the control of breathless expression. Plays a role in the cellular or tissue response to oxygen deprivation. This is Aryl hydrocarbon receptor nuclear translocator homolog (tgo) from Drosophila melanogaster (Fruit fly).